Reading from the N-terminus, the 279-residue chain is Protein BASIC PENTACYSTEINE2 (279 aa).

The interval 126–167 (TKKRKTNAKAGSTPKAKKPRKPKDENSNNNNNNNTNVTRVKP) is disordered. The segment covering 152 to 161 (SNNNNNNNTN) has biased composition (low complexity).

This sequence belongs to the BBR/BPC family. In terms of tissue distribution, expressed in seedlings, leaves and pistils. Detected in the base of flowers and tips of carpels, in sepal and petal vasculature, in pollen grains, in young rosette, in the lateral and tip of primary roots, and in ovule at the exception of the outer integument.

It is found in the nucleus. Transcriptional regulator that specifically binds to GA-rich elements (GAGA-repeats) present in regulatory sequences of genes involved in developmental processes. This Arabidopsis thaliana (Mouse-ear cress) protein is Protein BASIC PENTACYSTEINE2.